The primary structure comprises 930 residues: Protein translocase subunit SecA (930 aa).

Residues glutamine 83, 101-105 (GEGKT), and aspartate 491 contribute to the ATP site.

This sequence belongs to the SecA family. Monomer and homodimer. Part of the essential Sec protein translocation apparatus which comprises SecA, SecYEG and auxiliary proteins SecDF. Other proteins may also be involved.

The protein localises to the cell inner membrane. The protein resides in the cellular thylakoid membrane. Its subcellular location is the cytoplasm. It carries out the reaction ATP + H2O + cellular proteinSide 1 = ADP + phosphate + cellular proteinSide 2.. In terms of biological role, part of the Sec protein translocase complex. Interacts with the SecYEG preprotein conducting channel. Has a central role in coupling the hydrolysis of ATP to the transfer of proteins into and across the cell membrane, serving as an ATP-driven molecular motor driving the stepwise translocation of polypeptide chains across the membrane. Its function is as follows. Probably participates in protein translocation into and across both the cytoplasmic and thylakoid membranes in cyanobacterial cells. The sequence is that of Protein translocase subunit SecA from Trichormus variabilis (strain ATCC 29413 / PCC 7937) (Anabaena variabilis).